We begin with the raw amino-acid sequence, 374 residues long: 3-dehydroquinate synthase (374 aa).

The protein belongs to the archaeal-type DHQ synthase family.

The enzyme catalyses 2-amino-2,3,7-trideoxy-D-lyxo-hept-6-ulosonate + NAD(+) + H2O = 3-dehydroquinate + NH4(+) + NADH + H(+). Functionally, catalyzes the oxidative deamination and cyclization of 2-amino-3,7-dideoxy-D-threo-hept-6-ulosonic acid (ADH) to yield 3-dehydroquinate (DHQ), which is fed into the canonical shikimic pathway of aromatic amino acid biosynthesis. The chain is 3-dehydroquinate synthase from Methanothermobacter thermautotrophicus (strain ATCC 29096 / DSM 1053 / JCM 10044 / NBRC 100330 / Delta H) (Methanobacterium thermoautotrophicum).